Consider the following 279-residue polypeptide: Glutamate racemase (279 aa).

Substrate-binding positions include 13–14 and 45–46; these read DS and YG. Residue C76 is the Proton donor/acceptor of the active site. 77-78 is a binding site for substrate; it reads NT. Catalysis depends on C185, which acts as the Proton donor/acceptor. 186–187 provides a ligand contact to substrate; that stretch reads TH.

This sequence belongs to the aspartate/glutamate racemases family.

The catalysed reaction is L-glutamate = D-glutamate. Its pathway is cell wall biogenesis; peptidoglycan biosynthesis. In terms of biological role, provides the (R)-glutamate required for cell wall biosynthesis. The polypeptide is Glutamate racemase (Synechocystis sp. (strain ATCC 27184 / PCC 6803 / Kazusa)).